Consider the following 239-residue polypeptide: tRNA (guanine-N(7)-)-methyltransferase (239 aa).

Glutamate 69, glutamate 94, aspartate 121, and aspartate 144 together coordinate S-adenosyl-L-methionine. Aspartate 144 is an active-site residue. Lysine 148 is a substrate binding site. Residues 150-155 (RHNKRR) form an interaction with RNA region. Substrate-binding positions include aspartate 180 and 217-220 (TKFE).

The protein belongs to the class I-like SAM-binding methyltransferase superfamily. TrmB family. As to quaternary structure, monomer.

The catalysed reaction is guanosine(46) in tRNA + S-adenosyl-L-methionine = N(7)-methylguanosine(46) in tRNA + S-adenosyl-L-homocysteine. It functions in the pathway tRNA modification; N(7)-methylguanine-tRNA biosynthesis. Catalyzes the formation of N(7)-methylguanine at position 46 (m7G46) in tRNA. This chain is tRNA (guanine-N(7)-)-methyltransferase, found in Shigella flexneri serotype 5b (strain 8401).